Consider the following 393-residue polypeptide: Protein TsgA (393 aa).

Transmembrane regions (helical) follow at residues 11–31 (WISF…GMVM), 51–71 (FLNA…EIVP), 78–98 (FGFI…SLAL), 101–121 (AAMF…TFLI), 134–154 (LLFT…VAAF), 162–182 (WYWV…LTFG), 206–226 (IGVL…LGFI), 245–265 (ALVS…SFIL), 273–293 (ILTV…TGTQ), 298–318 (WFIL…ITLG), 332–352 (FILT…GPIV), and 361–381 (LLTA…LGFV).

It belongs to the major facilitator superfamily. TsgA family.

The protein localises to the cell inner membrane. The sequence is that of Protein TsgA from Salmonella dublin (strain CT_02021853).